Consider the following 95-residue polypeptide: Protein TusB (95 aa).

Belongs to the DsrH/TusB family. In terms of assembly, heterohexamer, formed by a dimer of trimers. The hexameric TusBCD complex contains 2 copies each of TusB, TusC and TusD. The TusBCD complex interacts with TusE.

The protein localises to the cytoplasm. Part of a sulfur-relay system required for 2-thiolation of 5-methylaminomethyl-2-thiouridine (mnm(5)s(2)U) at tRNA wobble positions. This chain is Protein TusB, found in Shigella sonnei (strain Ss046).